Reading from the N-terminus, the 1284-residue chain is DNA topoisomerase 2, mitochondrial (1284 aa).

A mitochondrion-targeting transit peptide spans 1–35 (MSKLLNNNNHKNLTNYLKFGKGIINNLNNKSKQVG). ATP is bound by residues asparagine 183, asparagine 212, 240-242 (GSN), and 253-260 (GRNGFGAK). The interval 445 to 447 (KKK) is interaction with DNA. An ATP-binding site is contributed by 478-480 (QSK). The region spanning 560-677 (CTLIITEGDS…NLLKRGFLVE (118 aa)) is the Toprim domain. Mg(2+)-binding residues include glutamate 566, aspartate 646, and aspartate 648. Residues 810 to 1232 (IPSLIDGLKP…DPKSLWTADL (423 aa)) form the Topo IIA-type catalytic domain. Residue tyrosine 900 is the O-(5'-phospho-DNA)-tyrosine intermediate of the active site. The interval 1245-1284 (EFQKKPLKTSSSSSFDVSSSSESAKLSSTRKSKTDKIKSK) is disordered. Positions 1254–1271 (SSSSSFDVSSSSESAKLS) are enriched in low complexity.

Belongs to the type II topoisomerase family. In terms of assembly, homodimer. The cofactor is Mg(2+). Mn(2+) is required as a cofactor. Requires Ca(2+) as cofactor.

The protein resides in the mitochondrion. It carries out the reaction ATP-dependent breakage, passage and rejoining of double-stranded DNA.. Functionally, control of topological states of DNA by transient breakage and subsequent rejoining of DNA strands. Topoisomerase II makes double-strand breaks. The polypeptide is DNA topoisomerase 2, mitochondrial (top2mt) (Dictyostelium discoideum (Social amoeba)).